We begin with the raw amino-acid sequence, 433 residues long: Legumain (433 aa).

The signal sequence occupies residues 1-17 (MVWKVAVFLSVALGIGA). Asn-91 is a glycosylation site (N-linked (GlcNAc...) asparagine). His-148 is an active-site residue. Residue Asn-167 is glycosylated (N-linked (GlcNAc...) asparagine). The active-site Nucleophile is Cys-189. Residues Asn-263 and Asn-272 are each glycosylated (N-linked (GlcNAc...) asparagine). Residues 324–433 (DLEESRQLTE…SMDHVCLGHY (110 aa)) constitute a propeptide that is removed on maturation. 2 cysteine pairs are disulfide-bonded: Cys-378–Cys-412 and Cys-390–Cys-429.

Belongs to the peptidase C13 family. In terms of assembly, homodimer before autocatalytic removal of the propeptide. Monomer after autocatalytic processing. May interact with integrins. Activated by autocatalytic processing at pH 4. In terms of tissue distribution, ubiquitous. Particularly abundant in kidney, heart and placenta.

The protein localises to the lysosome. The enzyme catalyses Hydrolysis of proteins and small molecule substrates at -Asn-|-Xaa- bonds.. Inhibited by CST6. Its function is as follows. Has a strict specificity for hydrolysis of asparaginyl bonds. Can also cleave aspartyl bonds slowly, especially under acidic conditions. Involved in the processing of proteins for MHC class II antigen presentation in the lysosomal/endosomal system. Also involved in MHC class I antigen presentation in cross-presenting dendritic cells by mediating cleavage and maturation of Perforin-2 (MPEG1), thereby promoting antigen translocation in the cytosol. Required for normal lysosomal protein degradation in renal proximal tubules. Required for normal degradation of internalized EGFR. Plays a role in the regulation of cell proliferation via its role in EGFR degradation. This is Legumain from Homo sapiens (Human).